The primary structure comprises 199 residues: 7-methyl-GTP pyrophosphatase (199 aa).

Asp74 acts as the Proton acceptor in catalysis.

It belongs to the Maf family. YceF subfamily. A divalent metal cation is required as a cofactor.

Its subcellular location is the cytoplasm. It carries out the reaction N(7)-methyl-GTP + H2O = N(7)-methyl-GMP + diphosphate + H(+). Its function is as follows. Nucleoside triphosphate pyrophosphatase that hydrolyzes 7-methyl-GTP (m(7)GTP). May have a dual role in cell division arrest and in preventing the incorporation of modified nucleotides into cellular nucleic acids. The protein is 7-methyl-GTP pyrophosphatase of Albidiferax ferrireducens (strain ATCC BAA-621 / DSM 15236 / T118) (Rhodoferax ferrireducens).